The following is a 352-amino-acid chain: Phosphoribosylformylglycinamidine cyclo-ligase (352 aa).

The protein belongs to the AIR synthase family.

The protein resides in the cytoplasm. The enzyme catalyses 2-formamido-N(1)-(5-O-phospho-beta-D-ribosyl)acetamidine + ATP = 5-amino-1-(5-phospho-beta-D-ribosyl)imidazole + ADP + phosphate + H(+). It participates in purine metabolism; IMP biosynthesis via de novo pathway; 5-amino-1-(5-phospho-D-ribosyl)imidazole from N(2)-formyl-N(1)-(5-phospho-D-ribosyl)glycinamide: step 2/2. This is Phosphoribosylformylglycinamidine cyclo-ligase from Pseudomonas fluorescens (strain Pf0-1).